The primary structure comprises 28 residues: Conotoxin as14b (28 aa).

2 disulfides stabilise this stretch: C7–C27 and C11–C23.

This sequence belongs to the conotoxin L superfamily. Expressed by the venom duct.

The protein localises to the secreted. In vivo, intracranial injection elicits scratching and grooming activity in mice, and causes body and rear limb extension and tail curling immediately upon injection. In Conus cancellatus (Cancellate cone), this protein is Conotoxin as14b.